Here is a 192-residue protein sequence, read N- to C-terminus: Erythropoietin (192 aa).

The signal sequence occupies residues 1-26 (MGVPERPTLLLLLSLLLLPLGLPVLC). A disulfide bridge links cysteine 33 with cysteine 187. 3 N-linked (GlcNAc...) asparagine glycosylation sites follow: asparagine 50, asparagine 64, and asparagine 109.

The protein belongs to the EPO/TPO family. In terms of tissue distribution, produced by kidney or liver of adult mammals and by liver of fetal or neonatal mammals.

The protein localises to the secreted. In terms of biological role, hormone involved in the regulation of erythrocyte proliferation and differentiation and the maintenance of a physiological level of circulating erythrocyte mass. Binds to EPOR leading to EPOR dimerization and JAK2 activation thereby activating specific downstream effectors, including STAT1 and STAT3. The chain is Erythropoietin (EPO) from Alexandromys oeconomus (Tundra vole).